Reading from the N-terminus, the 353-residue chain is Protein CEPU-1 (353 aa).

A signal peptide spans 1-28; that stretch reads MAQAKMQHPVSWVIFAGMAALLLFQGVP. Ig-like C2-type domains lie at 37-124, 134-216, and 220-314; these read PKAM…PKTS, PKIT…VKVT, and PPYI…ETTT. N-linked (GlcNAc...) asparagine glycosylation is found at Asn42, Asn68, and Asn150. A disulfide bridge connects residues Cys55 and Cys113. 2 disulfides stabilise this stretch: Cys155–Cys199 and Cys241–Cys293. N-linked (GlcNAc...) asparagine glycosylation is found at Asn282, Asn290, and Asn303. Ser330 carries GPI-anchor amidated serine lipidation. Residues 331-353 constitute a propeptide, removed in mature form; it reads GAWRRGSCAWLLALPLAQLARQF.

It belongs to the immunoglobulin superfamily. IgLON family. Interacts with NEGR1. Found on the dendrites, somata and axons of developing Purkinje cells. Undetectable on other neurons like Golgi or granule cells.

Its subcellular location is the cell membrane. Its function is as follows. It may be a cellular address molecule specific to Purkinje cells. It may represent a receptor or a subunit of a receptor complex. The chain is Protein CEPU-1 from Gallus gallus (Chicken).